We begin with the raw amino-acid sequence, 20 residues long: Venom protease (20 aa).

This sequence belongs to the peptidase S1 family. Post-translationally, contains 3 disulfide bonds. N-glycosylated. As to expression, expressed by the venom duct.

The protein resides in the secreted. This chain is Venom protease, found in Bombus terrestris (Buff-tailed bumblebee).